A 387-amino-acid polypeptide reads, in one-letter code: Acyl-[acyl-carrier-protein] 6-desaturase (387 aa).

Residues 1–29 constitute a chloroplast transit peptide; it reads MALVFKSIGAHKTPPCTLNLASPALYHTR. 6 residues coordinate Fe cation: glutamate 131, glutamate 169, histidine 172, glutamate 222, glutamate 255, and histidine 258.

Belongs to the fatty acid desaturase type 2 family. Requires Fe(2+) as cofactor.

It is found in the plastid. The protein localises to the chloroplast. The catalysed reaction is hexadecanoyl-[ACP] + 2 reduced [2Fe-2S]-[ferredoxin] + O2 + 2 H(+) = (6Z)-hexadecenoyl-[ACP] + 2 oxidized [2Fe-2S]-[ferredoxin] + 2 H2O. It functions in the pathway lipid metabolism; fatty acid metabolism. With respect to regulation, inhibited by KCN or H(2)O(2). Its function is as follows. Delta(6) fatty acid desaturase introducing a cis double bond at carbon 6 of palmitoyl-[acyl-carrier protein](16:0-ACP), producing 16:1(6Z)-ACP. No activity with the coenzyme A ester of the fatty acid. The position of the double bond is determined by its distance from the carboxyl end of the fatty acid. Low activity with several saturated acyl-[acyl-carrier protein]s, including 14:0-ACP and 18:0-ACP. Requires reduced ferredoxin for detectable in vitro activity. The polypeptide is Acyl-[acyl-carrier-protein] 6-desaturase (Thunbergia alata (Black-eyed Susan vine)).